The following is a 476-amino-acid chain: Probable isoprenylcysteine alpha-carbonyl methylesterase ICMEL1 (476 aa).

A compositionally biased stretch (polar residues) spans 92–104; sequence NCLSAFSDDTNGT. The interval 92 to 116 is disordered; that stretch reads NCLSAFSDDTNGTADGGNNSGDRQT. 2 helical membrane passes run 153-173 and 208-228; these read FMALGCYAFLLMPGFIQVGYY and VVAFVTGGAWIIGYKAWGSLL. Substrate-binding positions include 214 to 216 and 285 to 287; these read GGA and QSA. Residues S286, D388, and H420 contribute to the active site.

The protein belongs to the AB hydrolase superfamily. Isoprenylcysteine methylesterase family. Expressed in roots, rosette and cauline leaves, stems, flowers and siliques.

Its subcellular location is the endoplasmic reticulum membrane. It localises to the golgi apparatus membrane. It carries out the reaction [protein]-C-terminal S-[(2E,6E)-farnesyl]-L-cysteine methyl ester + H2O = [protein]-C-terminal S-[(2E,6E)-farnesyl]-L-cysteine + methanol + H(+). Catalyzes the demethylation of isoprenylcysteine methylesters. May be involved in the regulation of ABA signaling. The sequence is that of Probable isoprenylcysteine alpha-carbonyl methylesterase ICMEL1 from Arabidopsis thaliana (Mouse-ear cress).